A 375-amino-acid chain; its full sequence is 23S rRNA (uracil(747)-C(5))-methyltransferase RlmC (375 aa).

[4Fe-4S] cluster contacts are provided by C3, C11, C14, and C87. S-adenosyl-L-methionine contacts are provided by Q212, F241, E262, and N307. Catalysis depends on C334, which acts as the Nucleophile.

It belongs to the class I-like SAM-binding methyltransferase superfamily. RNA M5U methyltransferase family. RlmC subfamily.

It carries out the reaction uridine(747) in 23S rRNA + S-adenosyl-L-methionine = 5-methyluridine(747) in 23S rRNA + S-adenosyl-L-homocysteine + H(+). Functionally, catalyzes the formation of 5-methyl-uridine at position 747 (m5U747) in 23S rRNA. The chain is 23S rRNA (uracil(747)-C(5))-methyltransferase RlmC from Pectobacterium atrosepticum (strain SCRI 1043 / ATCC BAA-672) (Erwinia carotovora subsp. atroseptica).